The chain runs to 276 residues: Undecaprenyl-diphosphatase (276 aa).

The next 6 membrane-spanning stretches (helical) occupy residues Arg-43–Phe-63, Gly-85–Ile-105, Leu-109–Ala-129, Ala-183–Ser-203, Ala-214–Val-234, and Phe-249–Val-269.

It belongs to the UppP family.

It localises to the cell inner membrane. The catalysed reaction is di-trans,octa-cis-undecaprenyl diphosphate + H2O = di-trans,octa-cis-undecaprenyl phosphate + phosphate + H(+). In terms of biological role, catalyzes the dephosphorylation of undecaprenyl diphosphate (UPP). Confers resistance to bacitracin. The polypeptide is Undecaprenyl-diphosphatase (Pseudomonas putida (strain GB-1)).